A 455-amino-acid polypeptide reads, in one-letter code: tRNA modification GTPase MnmE (455 aa).

Residues Arg26, Glu86, and Arg125 each coordinate (6S)-5-formyl-5,6,7,8-tetrahydrofolate. The 155-residue stretch at Gly222–Phe376 folds into the TrmE-type G domain. Residue Asn232 coordinates K(+). GTP is bound by residues Asn232–Ser237, Thr251–Thr257, and Asp276–Gly279. Mg(2+) is bound at residue Ser236. 3 residues coordinate K(+): Thr251, Ile253, and Thr256. Thr257 contacts Mg(2+). Lys455 is a binding site for (6S)-5-formyl-5,6,7,8-tetrahydrofolate.

The protein belongs to the TRAFAC class TrmE-Era-EngA-EngB-Septin-like GTPase superfamily. TrmE GTPase family. Homodimer. Heterotetramer of two MnmE and two MnmG subunits. It depends on K(+) as a cofactor.

It localises to the cytoplasm. In terms of biological role, exhibits a very high intrinsic GTPase hydrolysis rate. Involved in the addition of a carboxymethylaminomethyl (cmnm) group at the wobble position (U34) of certain tRNAs, forming tRNA-cmnm(5)s(2)U34. This chain is tRNA modification GTPase MnmE, found in Lactococcus lactis subsp. cremoris (strain SK11).